Consider the following 258-residue polypeptide: Exosome complex component Rrp41 (258 aa).

It belongs to the RNase PH family. Rrp41 subfamily. In terms of assembly, component of the archaeal exosome complex. Forms a hexameric ring-like arrangement composed of 3 Rrp41-Rrp42 heterodimers. The hexameric ring associates with a trimer of Rrp4 and/or Csl4 subunits.

It is found in the cytoplasm. Its function is as follows. Catalytic component of the exosome, which is a complex involved in RNA degradation. Has 3'-&gt;5' exoribonuclease activity. Can also synthesize heteromeric RNA-tails. The sequence is that of Exosome complex component Rrp41 from Archaeoglobus fulgidus (strain ATCC 49558 / DSM 4304 / JCM 9628 / NBRC 100126 / VC-16).